The chain runs to 765 residues: DNA topoisomerase 1 (765 aa).

Positions 1 to 23 (MSGDHLHNDSQIEADFRLNDSHK) are enriched in basic and acidic residues. The interval 1–199 (MSGDHLHNDS…NKKKKPKKEE (199 aa)) is disordered. N-acetylserine is present on S2. Residues S2 and S10 each carry the phosphoserine modification. Positions 24–39 (HKDKHKDREHRHKEHK) are enriched in basic residues. A compositionally biased stretch (basic and acidic residues) spans 40-108 (KEKDREKSKH…DAKIKKEKEN (69 aa)). Residue S57 is modified to Phosphoserine. Residue K101 forms a Glycyl lysine isopeptide (Lys-Gly) (interchain with G-Cter in SUMO2) linkage. A Glycyl lysine isopeptide (Lys-Gly) (interchain with G-Cter in SUMO); alternate cross-link involves residue K103. Residue K103 forms a Glycyl lysine isopeptide (Lys-Gly) (interchain with G-Cter in SUMO2); alternate linkage. The residue at position 112 (S112) is a Phosphoserine. K117 is covalently cross-linked (Glycyl lysine isopeptide (Lys-Gly) (interchain with G-Cter in SUMO); alternate). K117 participates in a covalent cross-link: Glycyl lysine isopeptide (Lys-Gly) (interchain with G-Cter in SUMO2); alternate. K117 is covalently cross-linked (Glycyl lysine isopeptide (Lys-Gly) (interchain with G-Cter in SUMO1); alternate). A compositionally biased stretch (basic and acidic residues) spans 129-166 (PKEDIKPLKRPRDEDDADYKPKKIKTEDTKKEKKRKLE). Residues K134 and K148 each participate in a glycyl lysine isopeptide (Lys-Gly) (interchain with G-Cter in SUMO2) cross-link. K153 participates in a covalent cross-link: Glycyl lysine isopeptide (Lys-Gly) (interchain with G-Cter in SUMO); alternate. A Glycyl lysine isopeptide (Lys-Gly) (interchain with G-Cter in SUMO2); alternate cross-link involves residue K153. Glycyl lysine isopeptide (Lys-Gly) (interchain with G-Cter in SUMO2) cross-links involve residues K158 and K164. Residue K172 forms a Glycyl lysine isopeptide (Lys-Gly) (interchain with G-Cter in SUMO2); alternate linkage. Residue K172 is modified to N6-acetyllysine; alternate. Over residues 179-199 (KDKDKKVPEPDNKKKKPKKEE) the composition is skewed to basic and acidic residues. A Glycyl lysine isopeptide (Lys-Gly) (interchain with G-Cter in SUMO2) cross-link involves residue K204. N6-acetyllysine is present on K280. A Glycyl lysine isopeptide (Lys-Gly) (interchain with G-Cter in SUMO2) cross-link involves residue K336. 2 interaction with DNA regions span residues 425-426 (KY) and 488-493 (RAGNEK). Residues 432 to 765 (SSRIKGEKDW…IDMADEDYEF (334 aa)) enclose the Topo IB-type catalytic domain. A Phosphoserine; by CK2 modification is found at S506. Residue K549 forms a Glycyl lysine isopeptide (Lys-Gly) (interchain with G-Cter in SUMO2) linkage. The segment at 585-587 (TAK) is interaction with DNA. Glycyl lysine isopeptide (Lys-Gly) (interchain with G-Cter in SUMO2) cross-links involve residues K642, K700, and K712. The O-(3'-phospho-DNA)-tyrosine intermediate role is filled by Y723.

Belongs to the type IB topoisomerase family. Monomer. Interacts with ERCC6. Interacts with TPRN; TPRN interacts with a number of DNA damage response proteins, is recruited to sites of DNA damage and may play a role in DNA damage repair. In terms of assembly, (Microbial infection) Interacts with SV40 Large T antigen; this interactions allows viral DNA replication. Sumoylated. Lys-117 is the main site of sumoylation. Sumoylation plays a role in partitioning TOP1 between nucleoli and nucleoplasm. Levels are dramatically increased on camptothecin (CPT) treatment. In terms of processing, phosphorylation at Ser-506 by CK2 increases binding to supercoiled DNA and sensitivity to camptothecin. Endothelial cells.

The protein resides in the nucleus. It localises to the nucleolus. Its subcellular location is the nucleoplasm. The catalysed reaction is ATP-independent breakage of single-stranded DNA, followed by passage and rejoining.. With respect to regulation, specifically inhibited by camptothecin (CPT), a plant alkaloid with antitumor activity. Functionally, releases the supercoiling and torsional tension of DNA introduced during the DNA replication and transcription by transiently cleaving and rejoining one strand of the DNA duplex. Introduces a single-strand break via transesterification at a target site in duplex DNA. The scissile phosphodiester is attacked by the catalytic tyrosine of the enzyme, resulting in the formation of a DNA-(3'-phosphotyrosyl)-enzyme intermediate and the expulsion of a 5'-OH DNA strand. The free DNA strand then rotates around the intact phosphodiester bond on the opposing strand, thus removing DNA supercoils. Finally, in the religation step, the DNA 5'-OH attacks the covalent intermediate to expel the active-site tyrosine and restore the DNA phosphodiester backbone. Regulates the alternative splicing of tissue factor (F3) pre-mRNA in endothelial cells. Involved in the circadian transcription of the core circadian clock component BMAL1 by altering the chromatin structure around the ROR response elements (ROREs) on the BMAL1 promoter. This Homo sapiens (Human) protein is DNA topoisomerase 1 (TOP1).